A 95-amino-acid polypeptide reads, in one-letter code: Large ribosomal subunit protein bL27 (95 aa).

Residues 1-21 (MAHKKGASSSRNGRDSNAQRL) are disordered. Residues 7–19 (ASSSRNGRDSNAQ) show a composition bias toward polar residues.

Belongs to the bacterial ribosomal protein bL27 family.

This chain is Large ribosomal subunit protein bL27, found in Parafrankia sp. (strain EAN1pec).